The following is a 159-amino-acid chain: Large ribosomal subunit protein uL10 (159 aa).

It belongs to the universal ribosomal protein uL10 family. As to quaternary structure, part of the ribosomal stalk of the 50S ribosomal subunit. The N-terminus interacts with L11 and the large rRNA to form the base of the stalk. The C-terminus forms an elongated spine to which L12 dimers bind in a sequential fashion forming a multimeric L10(L12)X complex.

Forms part of the ribosomal stalk, playing a central role in the interaction of the ribosome with GTP-bound translation factors. This Campylobacter jejuni subsp. jejuni serotype O:6 (strain 81116 / NCTC 11828) protein is Large ribosomal subunit protein uL10.